Consider the following 281-residue polypeptide: Putative glutamine amidotransferase-like protein RP404 (281 aa).

The region spanning 19 to 281 is the Glutamine amidotransferase type-1 domain; it reads KYTYADFPWY…KALVKASKYI (263 aa). Positions 139–174 constitute an RPE1 insert domain; sequence RHFSKLTYSKKFECNTEAFATTVYTLPIKLEFENAP.

The polypeptide is Putative glutamine amidotransferase-like protein RP404 (Rickettsia prowazekii (strain Madrid E)).